Reading from the N-terminus, the 327-residue chain is Olfactory receptor 51T1 (327 aa).

Residues methionine 1–valine 27 lie on the Extracellular side of the membrane. N-linked (GlcNAc...) asparagine glycans are attached at residues asparagine 5 and asparagine 6. The chain crosses the membrane as a helical span at residues tryptophan 28 to phenylalanine 48. At leucine 49–arginine 56 the chain is on the cytoplasmic side. The chain crosses the membrane as a helical span at residues leucine 57–isoleucine 77. Over threonine 78 to isoleucine 101 the chain is Extracellular. The helical transmembrane segment at glutamine 102–phenylalanine 122 threads the bilayer. Residues aspartate 123 to arginine 141 lie on the Cytoplasmic side of the membrane. A helical transmembrane segment spans residues methionine 142–leucine 162. Topologically, residues valine 163–serine 198 are extracellular. The chain crosses the membrane as a helical span at residues phenylalanine 199–serine 219. At tyrosine 220–alanine 239 the chain is on the cytoplasmic side. Residues leucine 240–leucine 260 traverse the membrane as a helical segment. Residues serine 261–cysteine 275 lie on the Extracellular side of the membrane. A helical membrane pass occupies residues serine 276–leucine 296. Residues lysine 297 to aspartate 327 lie on the Cytoplasmic side of the membrane.

This sequence belongs to the G-protein coupled receptor 1 family.

It localises to the cell membrane. Its function is as follows. Odorant receptor. The sequence is that of Olfactory receptor 51T1 (OR51T1) from Homo sapiens (Human).